The chain runs to 390 residues: Nicotinate phosphoribosyltransferase (390 aa).

His-211 is subject to Phosphohistidine; by autocatalysis.

The protein belongs to the NAPRTase family. Post-translationally, transiently phosphorylated on a His residue during the reaction cycle. Phosphorylation strongly increases the affinity for substrates and increases the rate of nicotinate D-ribonucleotide production. Dephosphorylation regenerates the low-affinity form of the enzyme, leading to product release.

The enzyme catalyses nicotinate + 5-phospho-alpha-D-ribose 1-diphosphate + ATP + H2O = nicotinate beta-D-ribonucleotide + ADP + phosphate + diphosphate. Its pathway is cofactor biosynthesis; NAD(+) biosynthesis; nicotinate D-ribonucleotide from nicotinate: step 1/1. In terms of biological role, catalyzes the synthesis of beta-nicotinate D-ribonucleotide from nicotinate and 5-phospho-D-ribose 1-phosphate at the expense of ATP. The polypeptide is Nicotinate phosphoribosyltransferase (Chromohalobacter salexigens (strain ATCC BAA-138 / DSM 3043 / CIP 106854 / NCIMB 13768 / 1H11)).